Here is a 264-residue protein sequence, read N- to C-terminus: S-adenosylmethionine decarboxylase proenzyme (264 aa).

Serine 111 serves as the catalytic Schiff-base intermediate with substrate; via pyruvic acid. Serine 111 is modified (pyruvic acid (Ser); by autocatalysis). Histidine 116 serves as the catalytic Proton acceptor; for processing activity. Residue cysteine 139 is the Proton donor; for catalytic activity of the active site.

Belongs to the prokaryotic AdoMetDC family. Type 2 subfamily. As to quaternary structure, heterooctamer of four alpha and four beta chains arranged as a tetramer of alpha/beta heterodimers. Pyruvate is required as a cofactor. In terms of processing, is synthesized initially as an inactive proenzyme. Formation of the active enzyme involves a self-maturation process in which the active site pyruvoyl group is generated from an internal serine residue via an autocatalytic post-translational modification. Two non-identical subunits are generated from the proenzyme in this reaction, and the pyruvate is formed at the N-terminus of the alpha chain, which is derived from the carboxyl end of the proenzyme. The post-translation cleavage follows an unusual pathway, termed non-hydrolytic serinolysis, in which the side chain hydroxyl group of the serine supplies its oxygen atom to form the C-terminus of the beta chain, while the remainder of the serine residue undergoes an oxidative deamination to produce ammonia and the pyruvoyl group blocking the N-terminus of the alpha chain.

The catalysed reaction is S-adenosyl-L-methionine + H(+) = S-adenosyl 3-(methylsulfanyl)propylamine + CO2. It functions in the pathway amine and polyamine biosynthesis; S-adenosylmethioninamine biosynthesis; S-adenosylmethioninamine from S-adenosyl-L-methionine: step 1/1. Catalyzes the decarboxylation of S-adenosylmethionine to S-adenosylmethioninamine (dcAdoMet), the propylamine donor required for the synthesis of the polyamines spermine and spermidine from the diamine putrescine. The polypeptide is S-adenosylmethionine decarboxylase proenzyme (Geobacillus thermodenitrificans (strain NG80-2)).